The chain runs to 31 residues: Photosystem I reaction center subunit XII (31 aa).

The chain crosses the membrane as a helical span at residues 7 to 26 (QISIILLIALIPAFFSLKLG).

Belongs to the PsaM family.

The protein localises to the plastid. It is found in the chloroplast thylakoid membrane. This chain is Photosystem I reaction center subunit XII, found in Euglena myxocylindracea.